The following is a 284-amino-acid chain: Nodulation protein O (284 aa).

A disordered region spans residues 1-27; the sequence is MNIKGSDNGSFIKGSPENDIIDGGKKN. Hemolysin-type calcium-binding repeat units lie at residues 13-30, 31-48, 58-75, 94-111, and 112-129; these read KGSP…NDWI, DAGN…QDSI, WAGK…DDLL, HSGE…SDIL, and VAGD…GDAF. Residues aspartate 100, aspartate 109, aspartate 118, and aspartate 127 each contribute to the Ca(2+) site. The segment at 208–222 is export signal (aspartic acid box); the sequence is DRGFASAAAAATAID.

It is found in the secreted. Its function is as follows. The NodO protein may play a role in nodule development by direct interaction with the root hair cells or some other plant surface in a calcium-dependent manner. This Rhizobium leguminosarum bv. viciae protein is Nodulation protein O (nodO).